The chain runs to 260 residues: Indole-3-glycerol phosphate synthase (260 aa).

It belongs to the TrpC family.

The catalysed reaction is 1-(2-carboxyphenylamino)-1-deoxy-D-ribulose 5-phosphate + H(+) = (1S,2R)-1-C-(indol-3-yl)glycerol 3-phosphate + CO2 + H2O. It participates in amino-acid biosynthesis; L-tryptophan biosynthesis; L-tryptophan from chorismate: step 4/5. This is Indole-3-glycerol phosphate synthase from Thermoanaerobacter pseudethanolicus (strain ATCC 33223 / 39E) (Clostridium thermohydrosulfuricum).